We begin with the raw amino-acid sequence, 237 residues long: Purine nucleoside phosphorylase DeoD-type (237 aa).

Position 4 (His4) interacts with a purine D-ribonucleoside. Residues Gly20, Arg24, Arg43, and Arg87–Thr90 each bind phosphate. A purine D-ribonucleoside-binding positions include Glu179–Glu181 and Ser203–Asp204. Asp204 acts as the Proton donor in catalysis.

This sequence belongs to the PNP/UDP phosphorylase family. As to quaternary structure, homohexamer; trimer of homodimers.

It carries out the reaction a purine D-ribonucleoside + phosphate = a purine nucleobase + alpha-D-ribose 1-phosphate. It catalyses the reaction a purine 2'-deoxy-D-ribonucleoside + phosphate = a purine nucleobase + 2-deoxy-alpha-D-ribose 1-phosphate. Catalyzes the reversible phosphorolytic breakdown of the N-glycosidic bond in the beta-(deoxy)ribonucleoside molecules, with the formation of the corresponding free purine bases and pentose-1-phosphate. The protein is Purine nucleoside phosphorylase DeoD-type of Exiguobacterium sp. (strain ATCC BAA-1283 / AT1b).